The following is a 305-amino-acid chain: Aspartate carbamoyltransferase catalytic subunit (305 aa).

R53 and T54 together coordinate carbamoyl phosphate. L-aspartate is bound at residue K82. Carbamoyl phosphate contacts are provided by R103, H131, and Q134. L-aspartate-binding residues include R164 and R226. Residues L265 and P266 each contribute to the carbamoyl phosphate site.

Belongs to the aspartate/ornithine carbamoyltransferase superfamily. ATCase family. Heterooligomer of catalytic and regulatory chains.

The enzyme catalyses carbamoyl phosphate + L-aspartate = N-carbamoyl-L-aspartate + phosphate + H(+). Its pathway is pyrimidine metabolism; UMP biosynthesis via de novo pathway; (S)-dihydroorotate from bicarbonate: step 2/3. In terms of biological role, catalyzes the condensation of carbamoyl phosphate and aspartate to form carbamoyl aspartate and inorganic phosphate, the committed step in the de novo pyrimidine nucleotide biosynthesis pathway. This Ignicoccus hospitalis (strain KIN4/I / DSM 18386 / JCM 14125) protein is Aspartate carbamoyltransferase catalytic subunit.